Here is a 298-residue protein sequence, read N- to C-terminus: Probable aspartoacylase (298 aa).

The Zn(2+) site is built by histidine 13 and glutamate 16. Substrate is bound by residues arginine 54 and 61-62 (NR). Residue histidine 103 participates in Zn(2+) binding. Residues glutamate 161 and tyrosine 271 each contribute to the substrate site.

Belongs to the AspA/AstE family. Aspartoacylase subfamily. Zn(2+) serves as cofactor.

It carries out the reaction an N-acyl-L-aspartate + H2O = a carboxylate + L-aspartate. The protein is Probable aspartoacylase of Prochlorococcus marinus (strain MIT 9515).